A 721-amino-acid chain; its full sequence is Zinc-transporting ATPase (721 aa).

Residues 1 to 107 (MTQSSPLKTQ…HSHGAGEFNL (107 aa)) are Cytoplasmic-facing. One can recognise an HMA domain in the interval 8-74 (KTQQMQVGGM…RIAALGYTLA (67 aa)). The Zn(2+) site is built by Cys19 and Cys22. The interval 80–101 (VTLNGHKHPHSHREEGHSHSHG) is disordered. A helical membrane pass occupies residues 108–128 (KQELLPVLTAIALFTIAILFE). Over 129–140 (QPLHNTPGQIAE) the chain is Extracellular. Residues 141 to 160 (FAVIIPAYLLSGWTVLKTAG) form a helical membrane-spanning segment. The Cytoplasmic portion of the chain corresponds to 161–167 (RNILRGQ). Residues 168 to 187 (IFDENFLMTIATLGALAIHQ) traverse the membrane as a helical segment. Residues 188–190 (LPE) lie on the Extracellular side of the membrane. A helical membrane pass occupies residues 191–210 (AVAVMLFFRVGELFQEYSVG). Topologically, residues 211-344 (RSRRSIKALL…ITQFARYYTP (134 aa)) are cytoplasmic. Residues 345-363 (VIVFLSLAVALLPPLFIPG) traverse the membrane as a helical segment. Over 364–369 (ADRADW) the chain is Extracellular. Residues 370–387 (VYRALVLLVISCPCGLVI) form a helical membrane-spanning segment. Topologically, residues 388–671 (SIPLGYFGGI…AIHVARKTRQ (284 aa)) are cytoplasmic. Asp425 functions as the 4-aspartylphosphate intermediate in the catalytic mechanism. Mg(2+)-binding residues include Asp618 and Asp622. Residues 672 to 693 (IVVQNIVLALGIKALFIALGTI) traverse the membrane as a helical segment. Over 694-701 (GLATLWEA) the chain is Extracellular. Residues 702 to 717 (VFADVGVALLAILNAT) traverse the membrane as a helical segment. The Cytoplasmic segment spans residues 718–721 (RIAK).

It belongs to the cation transport ATPase (P-type) (TC 3.A.3) family. Type IB subfamily.

Its subcellular location is the cell membrane. It catalyses the reaction Zn(2+)(in) + ATP + H2O = Zn(2+)(out) + ADP + phosphate + H(+). The polypeptide is Zinc-transporting ATPase (ziaA) (Synechocystis sp. (strain ATCC 27184 / PCC 6803 / Kazusa)).